We begin with the raw amino-acid sequence, 477 residues long: Ankyrin repeat, SAM and basic leucine zipper domain-containing protein 1 (477 aa).

The interval 1 to 24 (MATSALRGLAVAGGGESSESEDDG) is disordered. S17, S18, and S20 each carry phosphoserine. ANK repeat units follow at residues 46-76 (EKKEKFKKALTTGDVSLVQELLDSGIISVDA), 80-109 (YGWTPLMYAASVANAELVRVLLDRGANASF), 112-146 (DKQTILITACSAHGSEEQILKCVELLLSRNADPNV), 150-179 (RLMTPIMYAARDGHTQVVALLVASGAEVNT), 183-212 (NGYTALTWAARQGHKSIVLKLLELGANKML), and 216-245 (DGKLPSEIAKRNKHHEIFNLLSFTLNPLEG). In terms of domain architecture, SAM spans 274–336 (SYAEFGDLEV…KILAALKELE (63 aa)).

Interacts with DDX4, PIWIL1, RANBP9 and TDRD1.

The protein localises to the cytoplasm. Plays a central role during spermatogenesis by repressing transposable elements and preventing their mobilization, which is essential for the germline integrity. Acts via the piRNA metabolic process, which mediates the repression of transposable elements during meiosis by forming complexes composed of piRNAs and Piwi proteins and governs the methylation and subsequent repression of transposons. Its association with pi-bodies suggests a participation in the primary piRNAs metabolic process. Required prior to the pachytene stage to facilitate the production of multiple types of piRNAs, including those associated with repeats involved in the regulation of retrotransposons. May act by mediating protein-protein interactions during germ cell maturation. The chain is Ankyrin repeat, SAM and basic leucine zipper domain-containing protein 1 (ASZ1) from Saimiri boliviensis boliviensis (Bolivian squirrel monkey).